Reading from the N-terminus, the 129-residue chain is M-zodatoxin-Lt8l (129 aa).

The signal sequence occupies residues 1-20; it reads MKYFVVXXALVAAFACIAES. A propeptide spanning residues 21–60 is cleaved from the precursor; the sequence is KPAESEHELAEVEEENELADLEDAVWLEDLADLSDLEETR.

This sequence belongs to the cationic peptide 06 (cytoinsectotoxin) family. Expressed by the venom gland.

It is found in the secreted. In terms of biological role, insecticidal, cytolytic and antimicrobial peptide. Forms voltage-dependent, ion-permeable channels in membranes. At high concentration causes cell membrane lysis. This is M-zodatoxin-Lt8l (cit 1-12) from Lachesana tarabaevi (Spider).